The chain runs to 133 residues: Small ribosomal subunit protein uS9 (133 aa).

The interval 114–133 (VERKKYGKKKARRSPQFSKR) is disordered. Residues 118 to 133 (KYGKKKARRSPQFSKR) show a composition bias toward basic residues.

Belongs to the universal ribosomal protein uS9 family.

This Fusobacterium nucleatum subsp. nucleatum (strain ATCC 25586 / DSM 15643 / BCRC 10681 / CIP 101130 / JCM 8532 / KCTC 2640 / LMG 13131 / VPI 4355) protein is Small ribosomal subunit protein uS9.